Reading from the N-terminus, the 640-residue chain is Threonine--tRNA ligase (640 aa).

Residues 1–59 (MKIKVVLPDGSEREYEKGTKPMEIAREVGIKKVIGAVVDEELWDLKRPLERDCRIRFVT) enclose the TGS domain. Residues 240–531 (DHRKLGPQLE…LIEHFAGAFP (292 aa)) are catalytic. Zn(2+) is bound by residues Cys-332, His-383, and His-508.

It belongs to the class-II aminoacyl-tRNA synthetase family. As to quaternary structure, homodimer. Requires Zn(2+) as cofactor.

The protein localises to the cytoplasm. It catalyses the reaction tRNA(Thr) + L-threonine + ATP = L-threonyl-tRNA(Thr) + AMP + diphosphate + H(+). Functionally, catalyzes the attachment of threonine to tRNA(Thr) in a two-step reaction: L-threonine is first activated by ATP to form Thr-AMP and then transferred to the acceptor end of tRNA(Thr). Also edits incorrectly charged L-seryl-tRNA(Thr). This Thermotoga neapolitana (strain ATCC 49049 / DSM 4359 / NBRC 107923 / NS-E) protein is Threonine--tRNA ligase.